The sequence spans 248 residues: Proteasome subunit alpha type-7 (248 aa).

S130 carries an O-linked (GlcNAc) serine glycan. Y153 bears the Phosphotyrosine; by ABL1 and ABL2 mark. An N6-acetyllysine modification is found at K227.

This sequence belongs to the peptidase T1A family. In terms of assembly, the 26S proteasome consists of a 20S proteasome core and two 19S regulatory subunits. The 20S proteasome core is a barrel-shaped complex made of 28 subunits that are arranged in four stacked rings. The two outer rings are each formed by seven alpha subunits, and the two inner rings are formed by seven beta subunits. The proteolytic activity is exerted by three beta-subunits PSMB5, PSMB6 and PSMB7. PSMA7 interacts directly with the PSMG1-PSMG2 heterodimer which promotes 20S proteasome assembly. Interacts with HIF1A. Interacts with RAB7A. Interacts with PRKN. Interacts with ABL1 and ABL2. Interacts with EMAP2. Interacts with MAVS. Phosphorylation by ABL1 or ABL2 leads to an inhibition of proteasomal activity and cell cycle transition blocks. Detected in liver (at protein level).

The protein localises to the cytoplasm. It is found in the nucleus. Its function is as follows. Component of the 20S core proteasome complex involved in the proteolytic degradation of most intracellular proteins. This complex plays numerous essential roles within the cell by associating with different regulatory particles. Associated with two 19S regulatory particles, forms the 26S proteasome and thus participates in the ATP-dependent degradation of ubiquitinated proteins. The 26S proteasome plays a key role in the maintenance of protein homeostasis by removing misfolded or damaged proteins that could impair cellular functions, and by removing proteins whose functions are no longer required. Associated with the PA200 or PA28, the 20S proteasome mediates ubiquitin-independent protein degradation. This type of proteolysis is required in several pathways including spermatogenesis (20S-PA200 complex) or generation of a subset of MHC class I-presented antigenic peptides (20S-PA28 complex). This chain is Proteasome subunit alpha type-7 (Psma7), found in Mus musculus (Mouse).